The following is a 293-amino-acid chain: Xyloglucan endotransglucosylase/hydrolase protein 31 (293 aa).

An N-terminal signal peptide occupies residues 1–20 (MALSLIFLALLVLCPSSGHS). A GH16 domain is found at 29–230 (YPSSRVPTSP…YRYQPFVAKY (202 aa)). The active-site Nucleophile is the E114. E118 functions as the Proton donor in the catalytic mechanism. Residues E118, 131 to 133 (QTN), 141 to 148 (DRNVIGRE), and 209 to 210 (DW) contribute to the xyloglucan site. Cystine bridges form between C238/C246 and C280/C293. R285 serves as a coordination point for xyloglucan.

This sequence belongs to the glycosyl hydrolase 16 family. XTH group 3 subfamily. In terms of assembly, interacts with XTH17. The formation of an XTH17-XTH31 dimer may be required for XET activity. Contains at least one intrachain disulfide bond essential for its enzymatic activity. In terms of tissue distribution, predominantly expressed in root. Weakly expressed in influorescence stems. Expressed in root tips and elongation zones, stems, young leaves, flowers and siliques. Expressed in root, hypocotyl, and etiolated whole seedlings.

The protein localises to the secreted. Its subcellular location is the cell wall. It localises to the extracellular space. The protein resides in the apoplast. It is found in the cell membrane. The enzyme catalyses breaks a beta-(1-&gt;4) bond in the backbone of a xyloglucan and transfers the xyloglucanyl segment on to O-4 of the non-reducing terminal glucose residue of an acceptor, which can be a xyloglucan or an oligosaccharide of xyloglucan.. It carries out the reaction xyloglucan + H2O = xyloglucan oligosaccharides.. Functionally, catalyzes xyloglucan endohydrolysis (XEH) and/or endotransglycosylation (XET). Cleaves and religates xyloglucan polymers, an essential constituent of the primary cell wall, and thereby participates in cell wall construction of growing tissues. Involved in the accumulation of hemicelluloses. Has a high XEH activity and only a slight XET activity in vitro, but the main in planta activity seems to be XET, thus controlling aluminum sensitivity. Acceptor preferences are XXXGol = XXFGol &gt; XXLGol &gt; XLLGol = XLFGol. This Arabidopsis thaliana (Mouse-ear cress) protein is Xyloglucan endotransglucosylase/hydrolase protein 31.